The following is a 146-amino-acid chain: 3-dehydroquinate dehydratase (146 aa).

The active-site Proton acceptor is tyrosine 22. Substrate-binding residues include asparagine 74, histidine 80, and aspartate 87. Histidine 100 functions as the Proton donor in the catalytic mechanism. Substrate contacts are provided by residues 101 to 102 and arginine 111; that span reads LS.

The protein belongs to the type-II 3-dehydroquinase family. As to quaternary structure, homododecamer.

It carries out the reaction 3-dehydroquinate = 3-dehydroshikimate + H2O. The protein operates within metabolic intermediate biosynthesis; chorismate biosynthesis; chorismate from D-erythrose 4-phosphate and phosphoenolpyruvate: step 3/7. Its function is as follows. Catalyzes a trans-dehydration via an enolate intermediate. This Clostridium beijerinckii (strain ATCC 51743 / NCIMB 8052) (Clostridium acetobutylicum) protein is 3-dehydroquinate dehydratase.